The chain runs to 96 residues: Putative regulatory protein Teth514_1762 (96 aa).

This sequence belongs to the RemA family.

This is Putative regulatory protein Teth514_1762 from Thermoanaerobacter sp. (strain X514).